We begin with the raw amino-acid sequence, 317 residues long: Aspartate carbamoyltransferase catalytic subunit (317 aa).

Residues Arg-66 and Thr-67 each contribute to the carbamoyl phosphate site. Lys-94 contributes to the L-aspartate binding site. Carbamoyl phosphate-binding residues include Arg-116, His-144, and Gln-147. L-aspartate is bound by residues Arg-177 and Arg-231. Carbamoyl phosphate is bound by residues Gly-272 and Pro-273.

This sequence belongs to the aspartate/ornithine carbamoyltransferase superfamily. ATCase family. In terms of assembly, heterododecamer (2C3:3R2) of six catalytic PyrB chains organized as two trimers (C3), and six regulatory PyrI chains organized as three dimers (R2).

The enzyme catalyses carbamoyl phosphate + L-aspartate = N-carbamoyl-L-aspartate + phosphate + H(+). Its pathway is pyrimidine metabolism; UMP biosynthesis via de novo pathway; (S)-dihydroorotate from bicarbonate: step 2/3. Catalyzes the condensation of carbamoyl phosphate and aspartate to form carbamoyl aspartate and inorganic phosphate, the committed step in the de novo pyrimidine nucleotide biosynthesis pathway. The protein is Aspartate carbamoyltransferase catalytic subunit of Bradyrhizobium sp. (strain BTAi1 / ATCC BAA-1182).